Here is a 203-residue protein sequence, read N- to C-terminus: Tic20 family protein Ycf60 (203 aa).

Helical transmembrane passes span 2–22, 51–71, 84–104, 131–151, and 153–173; these read IRLF…RLAL, TVPY…YVLP, IILP…VTFF, ILLF…PIEF, and ISFL…STIT.

It belongs to the Tic20 family.

It localises to the plastid. It is found in the chloroplast membrane. The chain is Tic20 family protein Ycf60 (ycf60) from Pyropia yezoensis (Susabi-nori).